A 169-amino-acid polypeptide reads, in one-letter code: HTH-type transcriptional regulator PchR (169 aa).

In terms of domain architecture, HTH marR-type spans 10-153 (YDIYVRLLHL…VLKFLEQLTS (144 aa)). The H-T-H motif DNA-binding region spans 64 to 87 (NAGIARKMNLSKANVTKISTKLIK).

As to quaternary structure, homodimer.

Represses the expression of the yvmC-cypX operon, which is involved in pulcherriminic acid biosynthesis. Also negatively regulates yvmA, yvnB and its own expression. Positively regulates yisI expression. Acts by binding specifically to a 14-bp palindromic motif, the YvmB box, which is present in the promoter region of the target genes. The protein is HTH-type transcriptional regulator PchR of Bacillus subtilis (strain 168).